The chain runs to 250 residues: uncharacterized protein (250 aa).

Residues 1–17 form the signal peptide; that stretch reads MRTLVLLSSVAILSTLA. Residues Asn-48, Asn-159, Asn-223, and Asn-239 are each glycosylated (N-linked (GlcNAc...) asparagine).

The protein resides in the secreted. This is an uncharacterized protein from Caenorhabditis elegans.